The following is a 492-amino-acid chain: Beclin 1-associated autophagy-related key regulator (492 aa).

The residue at position 29 (Ser29) is a Phosphoserine. A coiled-coil region spans residues 70–180; that stretch reads RDRERFIDKK…KLGDLVEKKT (111 aa). Disordered regions lie at residues 213-232 and 411-473; these read TSGRDPADVSSETDSAMTSS and GVAG…AGGM. The segment covering 222–232 has biased composition (polar residues); the sequence is SSETDSAMTSS. Ser416 is subject to Phosphoserine. A compositionally biased stretch (acidic residues) spans 424 to 433; it reads VSDEETDLGT. The residue at position 429 (Thr429) is a Phosphothreonine. Residues 447–473 are compositionally biased toward low complexity; that stretch reads PSQPVEVSQSQSTQASPPIASSSAGGM.

The protein belongs to the ATG14 family. As to quaternary structure, forms homooligomers; homo-oligomerization is essential for the roles in membrane tethering and enhancement of SNARE-mediated fusion. Component of the PI3K (PI3KC3/PI3K-III/class III phosphatidylinositol 3-kinase) complex I (PI3KC3-C1) in which the core composed of the catalytic subunit PIK3C3, the regulatory subunit PIK3R4 and BECN1 is associated with ATG14. PI3KC3-C1 displays a V-shaped architecture with PIK3R4 serving as a bridge between PIK3C3 and the ATG14:BECN1 subcomplex. PI3KC3-C1 can associate with further regulatory subunits. Interacts with PIK3CB. Interacts (via coiled-coil domain) with BECN2 (via coiled-coil domain); this interaction is tighter than BECN2 self-association. Interacts with the STX17-SNAP29 binary t-SNARE complex. Interacts with NRBF2. Interacts with PIK3C3 and BECN1; this interaction is increased in the absence of TMEM39A. Interacts with STEEP1; the interaction is required for trafficking of STING1 from the endoplasmic reticulum. Interacts with ARMC3 (via ARM domains). Post-translationally, ubiquitinated via 'Lys-6', 'Lys-11' and 'Lys-63'-linked polyubiquitin chains on multiple lysines by MARCHF7, leading to ATG14 aggregation and loss of interaction with STX17.

It localises to the cytoplasm. The protein localises to the endoplasmic reticulum membrane. It is found in the preautophagosomal structure membrane. Its function is as follows. Required for both basal and inducible autophagy. Determines the localization of the autophagy-specific PI3-kinase complex. Plays a role in autophagosome formation and MAP1LC3/LC3 conjugation to phosphatidylethanolamine. Promotes BECN1 translocation from the trans-Golgi network to autophagosomes. Enhances PIK3C3 activity in a BECN1-dependent manner. Essential for the autophagy-dependent phosphorylation of BECN1. Stimulates the phosphorylation of BECN1, but suppresses the phosphorylation PIK3C3 by AMPK. Binds to STX17-SNAP29 binary t-SNARE complex on autophagosomes and primes it for VAMP8 interaction to promote autophagosome-endolysosome fusion. Modulates the hepatic lipid metabolism. This Rattus norvegicus (Rat) protein is Beclin 1-associated autophagy-related key regulator.